The following is a 448-amino-acid chain: 26S proteasome regulatory subunit 4 homolog (448 aa).

Residues 1–10 (MGQAQSGNFS) show a composition bias toward polar residues. Positions 1–58 (MGQAQSGNFSNFGDGANGDNKKDQKKDKPKYEPPVPTRTGRRKKKAQSGPDASAKLPT) are disordered. The span at 19-31 (DNKKDQKKDKPKY) shows a compositional bias: basic and acidic residues. 232 to 239 (GAPGTGKT) lines the ATP pocket.

This sequence belongs to the AAA ATPase family.

Its subcellular location is the cytoplasm. The protein localises to the nucleus. The 26S proteasome is involved in the ATP-dependent degradation of ubiquitinated proteins. The regulatory (or ATPase) complex confers ATP dependency and substrate specificity to the 26S complex. In Schizosaccharomyces pombe (strain 972 / ATCC 24843) (Fission yeast), this protein is 26S proteasome regulatory subunit 4 homolog (mts2).